We begin with the raw amino-acid sequence, 210 residues long: Large ribosomal subunit protein uL4 (210 aa).

A disordered region spans residues 46 to 89 (QGTASTLTRSEVRGGGRKPYKQKGTGRARQGSIRTPLRPGGGII). Positions 60–71 (GGRKPYKQKGTG) are enriched in basic residues.

Belongs to the universal ribosomal protein uL4 family. As to quaternary structure, part of the 50S ribosomal subunit.

One of the primary rRNA binding proteins, this protein initially binds near the 5'-end of the 23S rRNA. It is important during the early stages of 50S assembly. It makes multiple contacts with different domains of the 23S rRNA in the assembled 50S subunit and ribosome. Its function is as follows. Forms part of the polypeptide exit tunnel. The chain is Large ribosomal subunit protein uL4 from Prochlorococcus marinus (strain MIT 9312).